Here is an 835-residue protein sequence, read N- to C-terminus: MLIAQNWVTGLLGHANEGWKVPSSDLDSGYVRVGFETEGYWPIPETTGPLVFGRVETIEELTEFKKPIRHCHVNVGDANGTGELQSIVCGARNFKEGDTVVVSLPGAVLPGDFAISARETYGRMSAGMICSASELGLADKQNSGIITLDPSYGEPGEDARQALGLEDTVFDVNVTPDRGYALSARGLTRELASAFSLTFTDPAIEPAVAGIEVKVPAVEGSLINVELREETKAIRFGLRKVSGIDPAAESPFWMQRELMLSGQRPVNAATDVTNYVMLLLGQPMHAFDAAKVTGDLVVRNATAGEKFETLDHVKRTLNEEDVVITDDNGIQSLAGVMGGLTSEISDTTTDVYFEAATWDTITVARTSRRHKLSSEASRRFERGVDPAIVEIALDIAATLLVEIAGGTVDAGRTLVGDVPAMQPITMKVTRPSELAGVDYSAETVIARLEEVGCTVAVSGDTLEVTPPTWRGDLTMSADLVEEVLRLEGLEAIPTIIPTAPAGRGLTDAQKRRRAVGHALAYAGYAEIIPSPFMDPEVFDVWGLAADDERRKTVSVLNPLEAERNVLSTSLLPSMLDAVKRNVARGHNDFSLFGLQQVAFEHGSGVSPMPSVASRPEESVVAELVDSLPNQPLHVATVGTGNIEFEGPWGKGRAYTFADAIESARAVARAAGVTLELANADALPWHPGRCAALLIDGTPVGYAGELHPQILEKAGLPARTCAMELDLSALPLVENLPAPVLSSFPALHQDIALVVDETIPAEDVRAVVEAGAGELIETVELFDVYRSEQLGENKKSLAFSLRFRATDRTLTDEEANEARLQAAELAKEKFNAEMRG.

In terms of domain architecture, tRNA-binding spans 44–160 (PETTGPLVFG…SYGEPGEDAR (117 aa)). Positions 419 to 494 (PAMQPITMKV…RLEGLEAIPT (76 aa)) constitute a B5 domain. The Mg(2+) site is built by D472, D478, E481, and E482. The 94-residue stretch at 741-834 (SSFPALHQDI…AKEKFNAEMR (94 aa)) folds into the FDX-ACB domain.

This sequence belongs to the phenylalanyl-tRNA synthetase beta subunit family. Type 1 subfamily. Tetramer of two alpha and two beta subunits. Mg(2+) serves as cofactor.

The protein resides in the cytoplasm. The catalysed reaction is tRNA(Phe) + L-phenylalanine + ATP = L-phenylalanyl-tRNA(Phe) + AMP + diphosphate + H(+). The sequence is that of Phenylalanine--tRNA ligase beta subunit from Corynebacterium glutamicum (strain ATCC 13032 / DSM 20300 / JCM 1318 / BCRC 11384 / CCUG 27702 / LMG 3730 / NBRC 12168 / NCIMB 10025 / NRRL B-2784 / 534).